Here is a 347-residue protein sequence, read N- to C-terminus: SCA7 domain-containing protein SELMODRAFT_439258 (347 aa).

The signal sequence occupies residues 1 to 13 (MCFFLSSLCPVVA). A disordered region spans residues 77–106 (RAEVGGTGPKVGRPRKLSVYNPREMSDGNP). Residues 134-201 (QHLPFTVDDL…NNSRKSQQAD (68 aa)) form the SCA7 domain.

This chain is SCA7 domain-containing protein SELMODRAFT_439258, found in Selaginella moellendorffii (Spikemoss).